A 92-amino-acid chain; its full sequence is Small integral membrane protein 12 (92 aa).

A helical transmembrane segment spans residues 15 to 34; sequence YVTFPVAFVVGAVGYHLEWF.

The protein belongs to the SMIM12 family.

It localises to the membrane. This is Small integral membrane protein 12 (SMIM12) from Nomascus leucogenys (Northern white-cheeked gibbon).